Consider the following 381-residue polypeptide: Cyclin-dependent kinase inhibitor CIP1 (381 aa).

A compositionally biased stretch (basic residues) spans 1 to 11 (MLLERLHKRLH). The tract at residues 1–30 (MLLERLHKRLHAGSSRRSQENKDKNCKPED) is disordered. Residues 17 to 30 (RSQENKDKNCKPED) show a composition bias toward basic and acidic residues. Phosphothreonine occurs at positions 65, 69, and 73.

Interact with the CDC28/CLN2 complex. Post-translationally, phosphorylated during S phase in a CDC28-dependent manner. Phosphorylated at Thr-65 and Thr-73 by HOG1 under osmotic stress. The phosphorylations of Thr-65 and Thr-73 are necessary for CIP1-induced growth inhibition.

The protein localises to the cytoplasm. Its subcellular location is the nucleus. Its function is as follows. Acts as an inhibitor of the CDC28/CLN2 cyclin-dependent kinase complex. Stabilizes the CDC28 inhibitor SIC1. Negatively regulates the G1/S phase transition. Contributes to osmostress-induced transitory G1 delay. The protein is Cyclin-dependent kinase inhibitor CIP1 of Saccharomyces cerevisiae (strain ATCC 204508 / S288c) (Baker's yeast).